The primary structure comprises 475 residues: MNTFETVIGIEIHIELNTKTKMFSPAPNKFNEKPNTLVHPIDVAYPGTLPRLNKEAVVKAIKLAKALNMEIDTLLRFDRKNYFYPDLPKSFQITQQNFPIGKNGTLTIESNGKKKEILIERIHLEEDTAKQIHLNDKTLVDYNRAGVPLIEIVTKPIISNAEEAANYVDMIRKIVSFIDISDAKMSEGSLRADVNISIRPFGQKFLGEKVEIKNLNSVSNLKKAIEFEKNLQIKKILSNEKIESQTKRFDESKNETVVMRTKSKTIDYKYIPEPNIPFIRIPKDFIDKIKVENLPWNIEKKLLSQNISSEFVQQFLNDFQMLLVFESIIYPNREKLSKVFFSELISLANSKNVHIKDLKFNFSEFVIALKFLDNGEISGKHLKTIINEIFTKNEKVEDIVSRNNLRLISDEDLIFNLINKASKDKNEIILEYPNKPEKVLKYLTGFVMKETEGQANPVLSFNLAKKYLDEKFKKV.

Belongs to the GatB/GatE family. GatB subfamily. In terms of assembly, heterotrimer of A, B and C subunits.

The enzyme catalyses L-glutamyl-tRNA(Gln) + L-glutamine + ATP + H2O = L-glutaminyl-tRNA(Gln) + L-glutamate + ADP + phosphate + H(+). It catalyses the reaction L-aspartyl-tRNA(Asn) + L-glutamine + ATP + H2O = L-asparaginyl-tRNA(Asn) + L-glutamate + ADP + phosphate + 2 H(+). Functionally, allows the formation of correctly charged Asn-tRNA(Asn) or Gln-tRNA(Gln) through the transamidation of misacylated Asp-tRNA(Asn) or Glu-tRNA(Gln) in organisms which lack either or both of asparaginyl-tRNA or glutaminyl-tRNA synthetases. The reaction takes place in the presence of glutamine and ATP through an activated phospho-Asp-tRNA(Asn) or phospho-Glu-tRNA(Gln). The protein is Aspartyl/glutamyl-tRNA(Asn/Gln) amidotransferase subunit B of Mycoplasma mobile (strain ATCC 43663 / 163K / NCTC 11711) (Mesomycoplasma mobile).